The chain runs to 266 residues: MEITTLQIVLVFIVACIAGMGSILDEFQFHRPLIACTLVGIVLGDMKTGIIIGGTLEMIALGWMNIGAAVAPDAALASIISTILVIAGHQSIGAGIALAIPLAAAGQVLTIIVRTITVAFQHAADKAADNGNLTAISWIHVSSLFLQAMRVAIPAVIVALSVGTSEVQNMLNAIPEVVTNGLNIAGGMIVVVGYAMVINMMRAGYLMPFFYLGFVTAAFTNFNLVALGVIGTVMAVLYIQLSPKYNRVAGAPAQAAGNNDLDNELD.

Met1 carries the post-translational modification N-formylmethionine. Over 1–4 (MEIT) the chain is Periplasmic. The region spanning 1 to 237 (MEITTLQIVL…GVIGTVMAVL (237 aa)) is the PTS EIIC type-4 domain. The stretch at 5–43 (TLQIVLVFIVACIAGMGSILDEFQFHRPLIACTLVGIVL) is an intramembrane region. Residues 44 to 46 (GDM) lie on the Periplasmic side of the membrane. Residues 47-86 (KTGIIIGGTLEMIALGWMNIGAAVAPDAALASIISTILVI) lie within the membrane without spanning it. Residues 87 to 90 (AGHQ) are Periplasmic-facing. The hydrophobic stretch at 91-124 (SIGAGIALAIPLAAAGQVLTIIVRTITVAFQHAA) threads the membrane. Over 125-132 (DKAADNGN) the chain is Cytoplasmic. The chain crosses the lipid bilayer at residues 133–160 (LTAISWIHVSSLFLQAMRVAIPAVIVAL). Over 161 to 176 (SVGTSEVQNMLNAIPE) the chain is Periplasmic. At 177 to 200 (VVTNGLNIAGGMIVVVGYAMVINM) the chain is embedded in the membrane. Over 201–207 (MRAGYLM) the chain is Cytoplasmic. The chain crosses the lipid bilayer at residues 208 to 218 (PFFYLGFVTAA). Residues 219-224 (FTNFNL) lie on the Periplasmic side of the membrane. Positions 225-242 (VALGVIGTVMAVLYIQLS) form a transmembrane segment. Residues 243–266 (PKYNRVAGAPAQAAGNNDLDNELD) lie on the Cytoplasmic side of the membrane.

Homotrimer of protomers that are composed of two subunits, IIC and IID.

The protein localises to the cell inner membrane. Its function is as follows. The phosphoenolpyruvate-dependent sugar phosphotransferase system (sugar PTS), a major carbohydrate active transport system, catalyzes the phosphorylation of incoming sugar substrates concomitantly with their translocation across the cell membrane. The enzyme II ManXYZ PTS system is involved in mannose transport. The polypeptide is PTS system mannose-specific EIIC component (manY) (Escherichia coli O157:H7).